We begin with the raw amino-acid sequence, 382 residues long: Gap junction alpha-1 protein (382 aa).

Residues 2–23 lie on the Cytoplasmic side of the membrane; it reads GDWSALGKLLDKVQAYSTAGGK. Ser5 carries the post-translational modification Phosphoserine. Residues 24 to 44 form a helical membrane-spanning segment; the sequence is VWLSVLFIFRILLLGTAVESA. Residues 45–76 are Extracellular-facing; sequence WGDEQSAFRCNTQQPGCENVCYDKSFPISHVR. 2 cysteine pairs are disulfide-bonded: Cys54/Cys192 and Cys187/Cys198. Residues 77–97 traverse the membrane as a helical segment; that stretch reads FWVLQIIFVSVPTLLYLAHVF. The Cytoplasmic portion of the chain corresponds to 98–155; the sequence is YVMRKEEKLNKKEEELKVAQTDGVNVEMHLKQIEIKKFKYGIEEHGKVKMRGGLLRTY. Residue Lys144 forms a Glycyl lysine isopeptide (Lys-Gly) (interchain with G-Cter in SUMO) linkage. The chain crosses the membrane as a helical span at residues 156-176; it reads IISILFKSVFEVAFLLIQWYI. Over 177 to 207 the chain is Extracellular; it reads YGFSLSAVYTCKRDPCPHQVDCFLSRPTEKT. Residues 208-228 traverse the membrane as a helical segment; that stretch reads IFIIFMLVVSLVSLALNIIEL. At 229-382 the chain is on the cytoplasmic side; that stretch reads FYAFFKGVKD…SRPRPDDLEI (154 aa). Lys237 participates in a covalent cross-link: Glycyl lysine isopeptide (Lys-Gly) (interchain with G-Cter in SUMO). Positions 244 to 382 are interaction with NOV; that stretch reads SDPYHATTGP…SRPRPDDLEI (139 aa). A Phosphotyrosine modification is found at Tyr247. 3 positions are modified to phosphoserine: Ser255, Ser257, and Ser262. The segment at 264 to 382 is interaction with UBQLN4; sequence KYAYFNGCSS…SRPRPDDLEI (119 aa). Position 271 is an S-nitrosocysteine (Cys271). Thr275 carries the post-translational modification Phosphothreonine. A phosphoserine mark is found at Ser306 and Ser314. Residues 317–332 show a composition bias toward polar residues; sequence QNRMGQAGSTISNSHA. Positions 317 to 382 are disordered; that stretch reads QNRMGQAGST…SRPRPDDLEI (66 aa). At Ser325 the chain carries Phosphoserine; by CK1. Thr326 is subject to Phosphothreonine. Phosphoserine; by CK1 is present on residues Ser328 and Ser330. A compositionally biased stretch (basic and acidic residues) spans 342–351; that stretch reads QNSKKLDAGH. 2 positions are modified to phosphoserine: Ser344 and Ser365. Positions 362-374 are enriched in low complexity; it reads RPSSRASSRASSR. Ser368 is modified (phosphoserine; by PKC/PRKCG and PKC/PRKCD). Phosphoserine occurs at positions 369 and 373.

It belongs to the connexin family. Alpha-type (group II) subfamily. A connexon is composed of a hexamer of connexins. Interacts with SGSM3. Interacts with RIC1/CIP150. Interacts with CNST and CSNK1D. Interacts (via C-terminus) with TJP1. Interacts (via C-terminus) with SRC (via SH3 domain). Interacts (not ubiquitinated) with UBQLN4 (via UBA domain). Interacts with NOV. Interacts with TMEM65. Interacts with ANK3/ANKG and PKP2. In terms of processing, phosphorylation at Ser-325, Ser-328 and Ser-330 by CK1 modulates gap junction assembly. Phosphorylated at Ser-368 by PRKCG; phosphorylation induces disassembly of gap junction plaques and inhibition of gap junction activity. Phosphorylation at Ser-368 by PRKCD triggers its internalization into small vesicles leading to proteasome-mediated degradation. Sumoylated with SUMO1, SUMO2 and SUMO3, which may regulate the level of functional Cx43 gap junctions at the plasma membrane. May be desumoylated by SENP1 or SENP2. Post-translationally, S-nitrosylation at Cys-271 is enriched at the muscle endothelial gap junction in arteries, it augments channel permeability and may regulate of smooth muscle cell to endothelial cell communication. In terms of processing, acetylated in the developing cortex; leading to delocalization from the cell membrane.

It is found in the cell membrane. The protein localises to the cell junction. It localises to the gap junction. Its subcellular location is the endoplasmic reticulum. In terms of biological role, gap junction protein that acts as a regulator of bladder capacity. A gap junction consists of a cluster of closely packed pairs of transmembrane channels, the connexons, through which materials of low MW diffuse from one cell to a neighboring cell. May play a critical role in the physiology of hearing by participating in the recycling of potassium to the cochlear endolymph. Negative regulator of bladder functional capacity: acts by enhancing intercellular electrical and chemical transmission, thus sensitizing bladder muscles to cholinergic neural stimuli and causing them to contract. May play a role in cell growth inhibition through the regulation of NOV expression and localization. Plays an essential role in gap junction communication in the ventricles. The protein is Gap junction alpha-1 protein (GJA1) of Sus scrofa (Pig).